The chain runs to 336 residues: Phosphatidylglycerol--prolipoprotein diacylglyceryl transferase (336 aa).

3 helical membrane passes run 16–36 (IGPV…VLAV), 53–73 (ILDI…IYHI), and 93–113 (IWNG…AAWA). Position 141 (Arg-141) interacts with a 1,2-diacyl-sn-glycero-3-phospho-(1'-sn-glycerol). 3 consecutive transmembrane segments (helical) span residues 190-210 (PTFL…VFLG), 220-240 (GSLF…IEAL), and 253-273 (INVW…IVIQ).

Belongs to the Lgt family.

It is found in the cell membrane. It catalyses the reaction L-cysteinyl-[prolipoprotein] + a 1,2-diacyl-sn-glycero-3-phospho-(1'-sn-glycerol) = an S-1,2-diacyl-sn-glyceryl-L-cysteinyl-[prolipoprotein] + sn-glycerol 1-phosphate + H(+). It participates in protein modification; lipoprotein biosynthesis (diacylglyceryl transfer). Catalyzes the transfer of the diacylglyceryl group from phosphatidylglycerol to the sulfhydryl group of the N-terminal cysteine of a prolipoprotein, the first step in the formation of mature lipoproteins. The chain is Phosphatidylglycerol--prolipoprotein diacylglyceryl transferase from Bifidobacterium adolescentis (strain ATCC 15703 / DSM 20083 / NCTC 11814 / E194a).